A 466-amino-acid polypeptide reads, in one-letter code: 23S rRNA (uracil(1939)-C(5))-methyltransferase RlmD (466 aa).

The TRAM domain occupies 11–69; the sequence is KITDTKHKEIVINRLDHLGAGIGHLNNKSIFVDGLLPGEKALVQITDDKKQYARAKVIK. [4Fe-4S] cluster-binding residues include cysteine 82, cysteine 88, cysteine 91, and cysteine 184. Residues glutamine 287, phenylalanine 316, asparagine 321, glutamate 337, asparagine 364, and aspartate 385 each coordinate S-adenosyl-L-methionine. Cysteine 411 acts as the Nucleophile in catalysis.

This sequence belongs to the class I-like SAM-binding methyltransferase superfamily. RNA M5U methyltransferase family. RlmD subfamily.

It carries out the reaction uridine(1939) in 23S rRNA + S-adenosyl-L-methionine = 5-methyluridine(1939) in 23S rRNA + S-adenosyl-L-homocysteine + H(+). Its function is as follows. Catalyzes the formation of 5-methyl-uridine at position 1939 (m5U1939) in 23S rRNA. The sequence is that of 23S rRNA (uracil(1939)-C(5))-methyltransferase RlmD from Photobacterium profundum (strain SS9).